Reading from the N-terminus, the 191-residue chain is Thymidine kinase (191 aa).

ATP is bound by residues 15–22 (GPMYSGKT) and 88–91 (DEAQ). E89 serves as the catalytic Proton acceptor. The Zn(2+) site is built by C145, C148, C183, and C186.

Belongs to the thymidine kinase family. Homotetramer.

It is found in the cytoplasm. It catalyses the reaction thymidine + ATP = dTMP + ADP + H(+). This Clostridium botulinum (strain Kyoto / Type A2) protein is Thymidine kinase.